We begin with the raw amino-acid sequence, 212 residues long: F-box protein GID2 (212 aa).

A disordered region spans residues 1-74 (MKFRSDSSGG…AGEGEQPRVP (74 aa)). A compositionally biased stretch (low complexity) spans 35–59 (DPSSSSSQGEASSSSQPPPQQQQEE). The F-box domain maps to 70–116 (QPRVPDLGEDLVFEVLRRAEARTLAAAACVSRGWRQLAEDERLWEAA).

Part of some SCF(GID2) complex, which consist of a SKP1 protein, CUL1, GID2 and some RING box protein. Interacts directly with SKP2 and SKP15. Interacts directly with DELLA protein SLR1. May have a higher affinity for phosphorylated SLR1 proteins. Widely expressed. Preferentially expressed in unopened flowers, shoot apices and elongation stem. Expressed at lower level in the leaf blades, leaf sheaths, roots and rachis.

The protein resides in the nucleus. Its pathway is protein modification; protein ubiquitination. Essential component of some SCF-type E3 ligase complex that positively regulates the gibberellin signaling pathway. Upon gibberellin treatment, the complex mediates the ubiquitination and subsequent degradation of DELLA protein SLR1, a repressor of the gibberellin pathway, leading to activate the pathway. The sequence is that of F-box protein GID2 (GID2) from Oryza sativa subsp. japonica (Rice).